The following is a 181-amino-acid chain: ATP synthase subunit b, chloroplastic (181 aa).

Residues 28–50 traverse the membrane as a helical segment; sequence IINLSVVLGVLIYFGKGVLSNLL.

It belongs to the ATPase B chain family. In terms of assembly, F-type ATPases have 2 components, F(1) - the catalytic core - and F(0) - the membrane proton channel. F(1) has five subunits: alpha(3), beta(3), gamma(1), delta(1), epsilon(1). F(0) has four main subunits: a(1), b(1), b'(1) and c(10-14). The alpha and beta chains form an alternating ring which encloses part of the gamma chain. F(1) is attached to F(0) by a central stalk formed by the gamma and epsilon chains, while a peripheral stalk is formed by the delta, b and b' chains.

The protein resides in the plastid. It is found in the chloroplast thylakoid membrane. F(1)F(0) ATP synthase produces ATP from ADP in the presence of a proton or sodium gradient. F-type ATPases consist of two structural domains, F(1) containing the extramembraneous catalytic core and F(0) containing the membrane proton channel, linked together by a central stalk and a peripheral stalk. During catalysis, ATP synthesis in the catalytic domain of F(1) is coupled via a rotary mechanism of the central stalk subunits to proton translocation. Its function is as follows. Component of the F(0) channel, it forms part of the peripheral stalk, linking F(1) to F(0). The polypeptide is ATP synthase subunit b, chloroplastic (Cryptomeria japonica (Japanese cedar)).